The following is a 184-amino-acid chain: Tyrosine-protein kinase receptor Tie-1 (184 aa).

Residues 1–164 (QLLQFAADVA…RMQEARKAYV (164 aa)) form the Protein kinase domain. Asp25 serves as the catalytic Proton acceptor. Tyr53 carries the phosphotyrosine; by autocatalysis modification.

Belongs to the protein kinase superfamily. Tyr protein kinase family. Tie subfamily. Interacts with svep1. As to expression, expressed in most populations of endothelial cells in 24 hours embryos, including the endocardium.

It localises to the cell membrane. It catalyses the reaction L-tyrosyl-[protein] + ATP = O-phospho-L-tyrosyl-[protein] + ADP + H(+). Functionally, transmembrane tyrosine-protein kinase. Required for the formation of facial lymphatic structures and brain lymphatic endothelial cells. Also required for embryonic ventral and dorsal migration of parachordal lymphoblasts along the arterial intersegmental vessel. Plays a role in the embryonic formation of the dorsal longitudinal anastomotic vessel. In Danio rerio (Zebrafish), this protein is Tyrosine-protein kinase receptor Tie-1 (tie1).